The chain runs to 564 residues: E3 ubiquitin-protein ligase hrd-like protein 1 (564 aa).

The chain crosses the membrane as a helical span at residues 17-37; sequence SYLALSVLVAIVASVTVFTTF. A glycan (N-linked (GlcNAc...) asparagine) is linked at N53. Helical transmembrane passes span 61–81, 86–106, 123–143, 148–168, 185–205, 215–235, and 272–292; these read YGLN…HYIL, LIWV…RLII, QAFF…IGPQ, VMPW…QFIT, KISF…FLIS, PAVL…YILF, and LSFA…IFFL. Residues 335-373 form an RING-type; atypical zinc finger; that stretch reads CVVCWELLGTSRRLPCSHQFHDWCLMWWLAQDSSCPTCR. One can recognise a CUE domain in the interval 432–474; the sequence is QLQTMLEQVREMFPQMSVDIIMTDLRQSGSAQSTIENILEGRI.

It localises to the membrane. Proposed to have a role in neuroprotection. The sequence is that of E3 ubiquitin-protein ligase hrd-like protein 1 (hrdl-1) from Caenorhabditis elegans.